Reading from the N-terminus, the 122-residue chain is Large ribosomal subunit protein uL14 (122 aa).

It belongs to the universal ribosomal protein uL14 family. As to quaternary structure, part of the 50S ribosomal subunit. Forms a cluster with proteins L3 and L19. In the 70S ribosome, L14 and L19 interact and together make contacts with the 16S rRNA in bridges B5 and B8.

Its function is as follows. Binds to 23S rRNA. Forms part of two intersubunit bridges in the 70S ribosome. This chain is Large ribosomal subunit protein uL14, found in Acinetobacter baumannii (strain SDF).